Consider the following 415-residue polypeptide: Mitochondrial distribution and morphology protein 12 (415 aa).

The SMP-LTD domain occupies 1–402; it reads MSFDINWSEL…WPSWVCFDLN (402 aa). Residues 53–146 are disordered; sequence EITIRHIGDP…PPLTDLRRSR (94 aa). 2 stretches are compositionally biased toward acidic residues: residues 62 to 75 and 92 to 103; these read PFDD…DDDE and NSSDDDEDDEYD.

The protein belongs to the MDM12 family. Component of the ER-mitochondria encounter structure (ERMES) or MDM complex, composed of MMM1, MDM10, MDM12 and MDM34. An MMM1 homodimer associates with one molecule of MDM12 on each side in a pairwise head-to-tail manner, and the SMP-LTD domains of MMM1 and MDM12 generate a continuous hydrophobic tunnel for phospholipid trafficking.

The protein localises to the mitochondrion outer membrane. The protein resides in the endoplasmic reticulum membrane. Component of the ERMES/MDM complex, which serves as a molecular tether to connect the endoplasmic reticulum (ER) and mitochondria. Components of this complex are involved in the control of mitochondrial shape and protein biogenesis, and function in nonvesicular lipid trafficking between the ER and mitochondria. MDM12 is required for the interaction of the ER-resident membrane protein MMM1 and the outer mitochondrial membrane-resident beta-barrel protein MDM10. The MDM12-MMM1 subcomplex functions in the major beta-barrel assembly pathway that is responsible for biogenesis of all mitochondrial outer membrane beta-barrel proteins, and acts in a late step after the SAM complex. The MDM10-MDM12-MMM1 subcomplex further acts in the TOM40-specific pathway after the action of the MDM12-MMM1 complex. Essential for establishing and maintaining the structure of mitochondria and maintenance of mtDNA nucleoids. The sequence is that of Mitochondrial distribution and morphology protein 12 from Debaryomyces hansenii (strain ATCC 36239 / CBS 767 / BCRC 21394 / JCM 1990 / NBRC 0083 / IGC 2968) (Yeast).